A 191-amino-acid chain; its full sequence is MKTYDFMNVNSFSPKERPIRLFGFEFGASHEESESKDNYNENNESIKDDNKEKRFKCHYCFRNFPTSQALGGHQNAHKRERQQTKRFNLHSNAAAFFHRQQNHIAASRLYEDRYSLEAVQINDARLGLCRMYNSSASFNRDRSSYYNRYIPWFIGDHQTRPTYVGGGSSSHGLFYESKKNVPDHVSLDLRL.

A C2H2-type zinc finger spans residues 55-77 (FKCHYCFRNFPTSQALGGHQNAH).

Expressed in inflorescence meristems, floral meristems and stem epidermis.

It localises to the nucleus. Its function is as follows. Probable transcription factor required for the initiation of inflorescence trichomes in response to gibberellin and cytokinin. Is not involved in the regulation of trichome branching. Is functionally equivalent to ZFP8. This Arabidopsis thaliana (Mouse-ear cress) protein is Zinc finger protein GIS2 (GIS2).